The chain runs to 220 residues: UPF0319 protein YccT (220 aa).

The first 20 residues, 1 to 20 (MKTGIVTTLIALCLPVSVFA), serve as a signal peptide directing secretion.

This sequence belongs to the UPF0319 family.

This chain is UPF0319 protein YccT, found in Shigella flexneri serotype 5b (strain 8401).